The primary structure comprises 531 residues: Fatty acid--[acyl-carrier-protein] ligase MmaC (531 aa).

T169 serves as a coordination point for Mg(2+). I218, V308, and S312 together coordinate ATP. A Mg(2+)-binding site is contributed by E313. D403 is an ATP binding site.

It belongs to the ATP-dependent AMP-binding enzyme family. It depends on Mg(2+) as a cofactor.

It catalyses the reaction a (2E)-enoyl fatty acid + holo-[ACP] + ATP = a (2E)-enoyl-[ACP] + AMP + diphosphate. The catalysed reaction is a (2E)-enoyl fatty acid + ATP + H(+) = a (2E)-2-fatty-enoyl-AMP + diphosphate. It carries out the reaction a (2E)-2-fatty-enoyl-AMP + holo-[ACP] = a (2E)-enoyl-[ACP] + AMP + H(+). The enzyme catalyses (2E)-decenoate + holo-[ACP] + ATP = (2E)-decenoyl-[ACP] + AMP + diphosphate. It catalyses the reaction a (3R)-3-isocyanyl-fatty acid + holo-[ACP] + ATP = a (3R)-3-isocyanyl-fatty acyl-[ACP] + AMP + diphosphate. The catalysed reaction is a (3R)-3-isocyanyl-fatty acid + ATP + H(+) = a (3R)-3-isocyanyl-fatty acyl-AMP + diphosphate. It carries out the reaction a (3R)-3-isocyanyl-fatty acyl-AMP + holo-[ACP] = a (3R)-3-isocyanyl-fatty acyl-[ACP] + AMP + H(+). Its function is as follows. Acyl:acyl-carrier protein ligase involved in the biosynthesis of a unique class of isonitrile lipopeptides (INLPs) that seem to play a role in metal acquisition in M.marinum. Acts twice during the INLP pathway, catalyzing the activation of (2E)-2-decenoate as well as probably the corresponding (3R)-3-isocyanyl-fatty acid as acyl-adenylates (acyl-AMP), and then the acyl transfer to the dedicated acyl-carrier protein MmaB. This chain is Fatty acid--[acyl-carrier-protein] ligase MmaC, found in Mycobacterium marinum (strain ATCC BAA-535 / M).